We begin with the raw amino-acid sequence, 257 residues long: Thiazole synthase (257 aa).

Lys98 functions as the Schiff-base intermediate with DXP in the catalytic mechanism. Residues Gly159, 185–186 (AG), and 207–208 (NT) contribute to the 1-deoxy-D-xylulose 5-phosphate site.

Belongs to the ThiG family. As to quaternary structure, homotetramer. Forms heterodimers with either ThiH or ThiS.

It localises to the cytoplasm. The enzyme catalyses [ThiS sulfur-carrier protein]-C-terminal-Gly-aminoethanethioate + 2-iminoacetate + 1-deoxy-D-xylulose 5-phosphate = [ThiS sulfur-carrier protein]-C-terminal Gly-Gly + 2-[(2R,5Z)-2-carboxy-4-methylthiazol-5(2H)-ylidene]ethyl phosphate + 2 H2O + H(+). The protein operates within cofactor biosynthesis; thiamine diphosphate biosynthesis. In terms of biological role, catalyzes the rearrangement of 1-deoxy-D-xylulose 5-phosphate (DXP) to produce the thiazole phosphate moiety of thiamine. Sulfur is provided by the thiocarboxylate moiety of the carrier protein ThiS. In vitro, sulfur can be provided by H(2)S. The polypeptide is Thiazole synthase (Anaeromyxobacter dehalogenans (strain 2CP-C)).